The primary structure comprises 573 residues: Cytosolic 5'-nucleotidase 1B (573 aa).

Residues 1-11 (MSQTSLKHKKK) show a composition bias toward basic residues. Disordered stretches follow at residues 1 to 200 (MSQT…PPTE) and 218 to 238 (EPEY…EEDE). Basic and acidic residues predominate over residues 12-35 (NEPGMRYSKESLDAEKRKDSDKTG). Residues 60–73 (NQWSRTSRSPSTGA) are compositionally biased toward polar residues. Residues 93-105 (SSTTSRTSSASPS) are compositionally biased toward low complexity. The span at 115–136 (TSEKSSIQQTPQNRPITQLESQ) shows a compositional bias: polar residues. Basic and acidic residues-rich tracts occupy residues 161-174 (WAHR…DLQL) and 182-194 (DSRE…REYP). Asp-428 functions as the Nucleophile in the catalytic mechanism.

This sequence belongs to the 5'-nucleotidase type 3 family. The cofactor is Mg(2+). In terms of tissue distribution, expressed at highest levels in testis. Also expressed in brain, skeletal muscle, kidney and heart.

It localises to the cytoplasm. The enzyme catalyses a ribonucleoside 5'-phosphate + H2O = a ribonucleoside + phosphate. It catalyses the reaction AMP + H2O = adenosine + phosphate. With respect to regulation, activated by ADP. Catalyzes the hydrolysis of nucleotide monophosphates, releasing inorganic phosphate and the corresponding nucleoside, AMP is the major substrate. In Mus musculus (Mouse), this protein is Cytosolic 5'-nucleotidase 1B (Nt5c1b).